The sequence spans 151 residues: Ribosome maturation factor RimP (151 aa).

It belongs to the RimP family.

The protein localises to the cytoplasm. In terms of biological role, required for maturation of 30S ribosomal subunits. The sequence is that of Ribosome maturation factor RimP from Shewanella sp. (strain MR-4).